The sequence spans 95 residues: Large ribosomal subunit protein eL31 (95 aa).

Belongs to the eukaryotic ribosomal protein eL31 family. Part of the 50S ribosomal subunit.

The protein is Large ribosomal subunit protein eL31 of Pyrococcus furiosus (strain ATCC 43587 / DSM 3638 / JCM 8422 / Vc1).